Reading from the N-terminus, the 577-residue chain is Pentatricopeptide repeat-containing protein At1g06143 (577 aa).

PPR repeat units follow at residues Asp-59–Pro-89, Asn-90–Pro-124, Ser-125–Phe-155, His-158–Ala-192, Trp-193–Lys-219, Asn-220–Lys-250, Asp-251–Pro-285, Asp-286–Leu-320, Asp-321–Lys-351, Asn-352–Pro-386, Asn-387–Asp-417, and Asn-423–Glu-453. The type E motif stretch occupies residues Ile-458–Asp-534. The type E(+) motif stretch occupies residues Lys-535–Gly-565.

The protein belongs to the PPR family. PCMP-E subfamily.

The chain is Pentatricopeptide repeat-containing protein At1g06143 (EMB1444) from Arabidopsis thaliana (Mouse-ear cress).